A 229-amino-acid chain; its full sequence is Endonuclease V (229 aa).

The Mg(2+) site is built by Asp46 and Asp114.

It belongs to the endonuclease V family. Requires Mg(2+) as cofactor.

The protein resides in the cytoplasm. The enzyme catalyses Endonucleolytic cleavage at apurinic or apyrimidinic sites to products with a 5'-phosphate.. DNA repair enzyme involved in the repair of deaminated bases. Selectively cleaves double-stranded DNA at the second phosphodiester bond 3' to a deoxyinosine leaving behind the intact lesion on the nicked DNA. In Streptomyces avermitilis (strain ATCC 31267 / DSM 46492 / JCM 5070 / NBRC 14893 / NCIMB 12804 / NRRL 8165 / MA-4680), this protein is Endonuclease V.